Here is a 234-residue protein sequence, read N- to C-terminus: Opacity protein opA65 (234 aa).

Residue alanine 1 is a signal peptide. The disordered stretch occupies residues 154–179 (TVTPKPKNGTQGGPVKSTSPIPAYHE).

It belongs to the opacity porin family.

The protein localises to the cell outer membrane. Implicated in a number of adherence functions. OPA proteins are implicated in pathogenesis and are subject to phase variation. This chain is Opacity protein opA65, found in Neisseria gonorrhoeae.